The sequence spans 267 residues: Small ribosomal subunit protein uS2 (267 aa).

A compositionally biased stretch (basic and acidic residues) spans 233–250 (RAESDKAETDKVEVEGKG). Residues 233 to 267 (RAESDKAETDKVEVEGKGEAPAAEAAEVVESADKA) form a disordered region. Low complexity predominate over residues 251–261 (EAPAAEAAEVV).

It belongs to the universal ribosomal protein uS2 family.

In Syntrophotalea carbinolica (strain DSM 2380 / NBRC 103641 / GraBd1) (Pelobacter carbinolicus), this protein is Small ribosomal subunit protein uS2.